We begin with the raw amino-acid sequence, 1064 residues long: Importin-13 homolog A (1064 aa).

Residues 40–109 (ALPQIQQWLI…LDNLLLFLKT (70 aa)) enclose the Importin N-terminal domain. Disordered regions lie at residues 695 to 722 (TTQQENNNNNNNNNNNNNNNNNNNNNNN) and 839 to 860 (NNKKNNKKINNNIDIDNDNENN). The span at 700–722 (NNNNNNNNNNNNNNNNNNNNNNN) shows a compositional bias: low complexity.

It belongs to the importin beta family. In terms of assembly, forms a complex with an importin alpha subunit.

It localises to the cytoplasm. Its subcellular location is the nucleus envelope. In terms of biological role, required for nuclear protein import and mediates docking of import substrate to distinct nucleoporins. This chain is Importin-13 homolog A (ipo13A), found in Dictyostelium discoideum (Social amoeba).